An 89-amino-acid chain; its full sequence is Small ribosomal subunit protein uS15 (89 aa).

It belongs to the universal ribosomal protein uS15 family. As to quaternary structure, part of the 30S ribosomal subunit. Forms a bridge to the 50S subunit in the 70S ribosome, contacting the 23S rRNA.

One of the primary rRNA binding proteins, it binds directly to 16S rRNA where it helps nucleate assembly of the platform of the 30S subunit by binding and bridging several RNA helices of the 16S rRNA. Functionally, forms an intersubunit bridge (bridge B4) with the 23S rRNA of the 50S subunit in the ribosome. In Mesorhizobium japonicum (strain LMG 29417 / CECT 9101 / MAFF 303099) (Mesorhizobium loti (strain MAFF 303099)), this protein is Small ribosomal subunit protein uS15.